A 354-amino-acid chain; its full sequence is Biotin synthase (354 aa).

Residues 41–265 (NEVQISRLLS…IMPHSRVRLS (225 aa)) form the Radical SAM core domain. [4Fe-4S] cluster contacts are provided by Cys-56, Cys-60, and Cys-63. Residues Cys-100, Cys-131, Cys-191, and Arg-263 each contribute to the [2Fe-2S] cluster site.

The protein belongs to the radical SAM superfamily. Biotin synthase family. Homodimer. [4Fe-4S] cluster serves as cofactor. Requires [2Fe-2S] cluster as cofactor.

The enzyme catalyses (4R,5S)-dethiobiotin + (sulfur carrier)-SH + 2 reduced [2Fe-2S]-[ferredoxin] + 2 S-adenosyl-L-methionine = (sulfur carrier)-H + biotin + 2 5'-deoxyadenosine + 2 L-methionine + 2 oxidized [2Fe-2S]-[ferredoxin]. It participates in cofactor biosynthesis; biotin biosynthesis; biotin from 7,8-diaminononanoate: step 2/2. Its function is as follows. Catalyzes the conversion of dethiobiotin (DTB) to biotin by the insertion of a sulfur atom into dethiobiotin via a radical-based mechanism. In Shewanella sediminis (strain HAW-EB3), this protein is Biotin synthase.